The sequence spans 408 residues: MKRAGRTMVERTSKFLLIVAASVCFMLILYQYVGPGLSLGAPSGRPYAEEPDLFPTPDPHYVKKYYFPVRELERELAFDMKGEDVIVFLHIQKTGGTTFGRHLVQNVRLEVPCDCRPGQKKCTCYRPNRRETWLFSRFSTGWSCGLHADWTELTNCVPGVLGRRESAPNRTPRKFYYITLLRDPVSRYLSEWRHVQRGATWKTSLHMCDGRTPTPEELPSCYEGTDWSGCTLQEFMDCPYNLANNRQVRMLADLSLVGCYNMSFIPENKRAQILLESAKKNLKDMAFFGLTEFQRKTQYLFERTFNLKFIRPFMQYNSTRAGGVEVDNDTIRRIEELNDLDMQLYDYAKDLFQQRYQYKRQLERMEQRIKNREERLLHRSNEALPKEETEEQGRLPTEDYMSHIIEKW.

The Cytoplasmic portion of the chain corresponds to 8-14; sequence MVERTSK. The chain crosses the membrane as a helical; Signal-anchor for type II membrane protein span at residues 15–35; sequence FLLIVAASVCFMLILYQYVGP. Over 36–408 the chain is Lumenal; sequence GLSLGAPSGR…DYMSHIIEKW (373 aa). 90–98 is a 3'-phosphoadenylyl sulfate binding site; sequence HIQKTGGTT. Substrate contacts are provided by residues 120 to 121, arginine 137, tryptophan 142, and histidine 147; that span reads KK. Histidine 147 serves as the catalytic Proton acceptor. 3'-phosphoadenylyl sulfate-binding residues include arginine 182 and serine 190. Histidine 194 and tryptophan 201 together coordinate substrate. An N-linked (GlcNAc...) asparagine glycan is attached at asparagine 261. 314–316 is a binding site for 3'-phosphoadenylyl sulfate; the sequence is MQY. Asparagine 317 carries N-linked (GlcNAc...) asparagine glycosylation. Residue 320 to 321 participates in 3'-phosphoadenylyl sulfate binding; that stretch reads RA. Residue asparagine 328 is glycosylated (N-linked (GlcNAc...) asparagine). Residues 348–382 are a coiled coil; it reads AKDLFQQRYQYKRQLERMEQRIKNREERLLHRSNE. The tract at residues 376 to 396 is disordered; that stretch reads LLHRSNEALPKEETEEQGRLP.

It belongs to the sulfotransferase 6 family. Post-translationally, N-glycosylated.

The protein localises to the membrane. The enzyme catalyses alpha-D-glucosaminyl-[heparan sulfate](n) + 3'-phosphoadenylyl sulfate = 6-sulfo-alpha-D-glucosaminyl-[heparan sulfate](n) + adenosine 3',5'-bisphosphate + H(+). Functionally, 6-O-sulfation enzyme which catalyzes the transfer of sulfate from 3'-phosphoadenosine 5'-phosphosulfate (PAPS) to position 6 of the N-sulfoglucosamine residue (GlcNS) of heparan sulfate. May also play a role in limb development. This Gallus gallus (Chicken) protein is Heparan-sulfate 6-O-sulfotransferase 1.